The sequence spans 842 residues: Non-motile and phage-resistance protein (842 aa).

3 helical membrane passes run 29 to 50 (VFVR…AFGV), 283 to 303 (GAFS…LLMI), and 343 to 363 (VYLS…VVSG). The PAS domain occupies 318-389 (SERRFRLAVE…QALANAAMYG (72 aa)). A Histidine kinase domain is found at 607–830 (NMSHELRTPL…TVSFTLPVRH (224 aa)). His610 is subject to Phosphohistidine; by autocatalysis.

The protein resides in the cell membrane. It carries out the reaction ATP + protein L-histidine = ADP + protein N-phospho-L-histidine.. Member of the two-component regulatory system involved in the regulation of polar organelle development. PleC functions as a membrane-associated protein kinase that transfers phosphate to the response regulator PleD, leading to its activation. The polypeptide is Non-motile and phage-resistance protein (pleC) (Caulobacter vibrioides (strain ATCC 19089 / CIP 103742 / CB 15) (Caulobacter crescentus)).